Reading from the N-terminus, the 394-residue chain is Uroporphyrinogen decarboxylase 2, chloroplastic (394 aa).

Substrate contacts are provided by residues 74 to 78 (RQAGR), F93, S123, D124, Y201, S256, and H371.

Belongs to the uroporphyrinogen decarboxylase family. In terms of assembly, homodimer.

The protein resides in the plastid. The protein localises to the chloroplast. The enzyme catalyses uroporphyrinogen III + 4 H(+) = coproporphyrinogen III + 4 CO2. Its pathway is porphyrin-containing compound metabolism; protoporphyrin-IX biosynthesis; coproporphyrinogen-III from 5-aminolevulinate: step 4/4. The protein operates within porphyrin-containing compound metabolism; chlorophyll biosynthesis. Functionally, catalyzes the decarboxylation of four acetate groups of uroporphyrinogen-III to yield coproporphyrinogen-III. In Arabidopsis thaliana (Mouse-ear cress), this protein is Uroporphyrinogen decarboxylase 2, chloroplastic (HEME2).